A 314-amino-acid polypeptide reads, in one-letter code: Ribonuclease Z (314 aa).

The Zn(2+) site is built by His-61, His-63, Asp-65, His-66, His-137, Asp-207, and His-263. Asp-65 (proton acceptor) is an active-site residue.

This sequence belongs to the RNase Z family. As to quaternary structure, homodimer. It depends on Zn(2+) as a cofactor.

The catalysed reaction is Endonucleolytic cleavage of RNA, removing extra 3' nucleotides from tRNA precursor, generating 3' termini of tRNAs. A 3'-hydroxy group is left at the tRNA terminus and a 5'-phosphoryl group is left at the trailer molecule.. Functionally, zinc phosphodiesterase, which displays some tRNA 3'-processing endonuclease activity. Probably involved in tRNA maturation, by removing a 3'-trailer from precursor tRNA. The chain is Ribonuclease Z from Thermococcus gammatolerans (strain DSM 15229 / JCM 11827 / EJ3).